The sequence spans 222 residues: MLSRAVCGTSRQLAPVLGYLGSRQKHSLPDLPYDYGALEPHINAQIMQLHHSKHHAAYVNNLNVTEEKYQEALAKGDVTAQIALQPALKFNGGGHINHSIFWTNLSPNGGGEPKGELLEAIKRDFGSFDKFKEKLTAASVGVQGSGWGWLGFNKERGHLQIAACPNQDPLQGTTGLIPLLGIDVWEHAYYLQYKNVRPDYLKAIWNVINWENVTERYMACKK.

A mitochondrion-targeting transit peptide spans 1 to 24 (MLSRAVCGTSRQLAPVLGYLGSRQ). His50 contributes to the Mn(2+) binding site. Tyr58 bears the 3'-nitrotyrosine mark. 2 positions are modified to N6-acetyllysine; alternate: Lys68 and Lys75. An N6-succinyllysine; alternate mark is found at Lys68 and Lys75. Mn(2+) is bound at residue His98. Residue Lys114 is modified to N6-acetyllysine. Residues Lys122 and Lys130 each carry the N6-acetyllysine; alternate modification. Residues Lys122 and Lys130 each carry the N6-succinyllysine; alternate modification. Mn(2+) is bound by residues Asp183 and His187. Lys202 bears the N6-acetyllysine mark.

It belongs to the iron/manganese superoxide dismutase family. Homotetramer. Mn(2+) serves as cofactor. Post-translationally, nitrated under oxidative stress. Nitration coupled with oxidation inhibits the catalytic activity. In terms of processing, acetylation at Lys-122 decreases enzymatic activity. Deacetylated by SIRT3 upon exposure to ionizing radiations or after long fasting. Polyubiquitinated; leading to proteasomal degradation. Deubiquitinated by USP36 which increases protein stability.

It localises to the mitochondrion matrix. The catalysed reaction is 2 superoxide + 2 H(+) = H2O2 + O2. Functionally, destroys superoxide anion radicals which are normally produced within the cells and which are toxic to biological systems. The chain is Superoxide dismutase [Mn], mitochondrial (SOD2) from Homo sapiens (Human).